We begin with the raw amino-acid sequence, 138 residues long: Transcription antitermination protein NusB (138 aa).

The protein belongs to the NusB family.

In terms of biological role, involved in transcription antitermination. Required for transcription of ribosomal RNA (rRNA) genes. Binds specifically to the boxA antiterminator sequence of the ribosomal RNA (rrn) operons. The chain is Transcription antitermination protein NusB from Colwellia psychrerythraea (strain 34H / ATCC BAA-681) (Vibrio psychroerythus).